The primary structure comprises 725 residues: Gamma-tubulin complex component 5 (725 aa).

Residues 222–246 are disordered; sequence TENEEKMSDNASASSGSDQGPSSRQ. A compositionally biased stretch (low complexity) spans 232 to 244; the sequence is ASASSGSDQGPSS.

Belongs to the TUBGCP family. Component of the gamma-tubulin ring complex (gTuRC) consisting of TUBGCP2, TUBGCP3, TUBGCP4, TUBGCP5 and TUBGCP6 and gamma-tubulin TUBG1 or TUBG2. TUBGCP2, TUBGCP3, TUBGCP4, TUBGCP5 and TUBGCP6 assemble in a 5:5:2:1:1 stoichiometry; each is associated with a gamma-tubulin, thereby arranging 14 gamma-tubulins in a helical manner. Gamma-tubulin at the first position is blocked by TUBGCP3 at the last position, allowing 13 protafilaments to grow into a microtubule. The gTuRC (via TUBGCP3 and TUBGCP6) interacts with ACTB and MZT1; the interactions form a luminal bridge that stabilizes the initial structure during complex assembly. The gTuRC (via TUBGCP2) interacts with MZT2A/MZT2B and CDK5RAP2 (via CM1 motif); the interactions play a role in gTuRC activation.

It localises to the cytoplasm. The protein resides in the cytoskeleton. The protein localises to the microtubule organizing center. Its subcellular location is the centrosome. Its function is as follows. Component of the gamma-tubulin ring complex (gTuRC) which mediates microtubule nucleation. The gTuRC regulates the minus-end nucleation of alpha-beta tubulin heterodimers that grow into microtubule protafilaments, a critical step in centrosome duplication and spindle formation. The protein is Gamma-tubulin complex component 5 (TUBGCP5) of Macaca fascicularis (Crab-eating macaque).